We begin with the raw amino-acid sequence, 321 residues long: Cytochrome f (321 aa).

A signal peptide spans M1–A35. Heme contacts are provided by Y36, C56, C59, and H60. Residues I287–L306 traverse the membrane as a helical segment.

This sequence belongs to the cytochrome f family. In terms of assembly, the 4 large subunits of the cytochrome b6-f complex are cytochrome b6, subunit IV (17 kDa polypeptide, petD), cytochrome f and the Rieske protein, while the 4 small subunits are PetG, PetL, PetM and PetN. The complex functions as a dimer. Heme serves as cofactor.

It is found in the plastid. The protein resides in the chloroplast thylakoid membrane. Its function is as follows. Component of the cytochrome b6-f complex, which mediates electron transfer between photosystem II (PSII) and photosystem I (PSI), cyclic electron flow around PSI, and state transitions. This is Cytochrome f from Psilotum nudum (Whisk fern).